The chain runs to 121 residues: Cytochrome B5-like protein (121 aa).

Residues 1 to 21 (MIAVIGLLLGFLVSALFLIQG) form a helical membrane-spanning segment. The tract at residues 24 to 49 (RRTNDNQEKKRSSSEPVEDVVRPKSY) is disordered. Residues 26–36 (TNDNQEKKRSS) are compositionally biased toward basic and acidic residues. One can recognise a Cytochrome b5 heme-binding domain in the interval 46–121 (PKSYSKSEVA…IEDFYIGELH (76 aa)). The heme site is built by His-81 and His-104.

It belongs to the cytochrome b5 family.

The protein localises to the membrane. The protein is Cytochrome B5-like protein of Arabidopsis thaliana (Mouse-ear cress).